The chain runs to 492 residues: Dynein regulatory complex subunit 2 (492 aa).

Coiled-coil stretches lie at residues 16 to 95 (LTEE…FERV), 256 to 318 (VQSA…AAQA), and 373 to 401 (LSEEEQKQEKAKAMESSNEKLTQLMHDYS).

The protein belongs to the DRC2 family. Component of the nexin-dynein regulatory complex (N-DRC).

The protein resides in the cytoplasm. It is found in the cytoskeleton. It localises to the flagellum basal body. The protein localises to the cell projection. Its subcellular location is the cilium. The protein resides in the flagellum. It is found in the flagellum axoneme. Its function is as follows. Component of the nexin-dynein regulatory complex (N-DRC), a key regulator of ciliary/flagellar motility which maintains the alignment and integrity of the distal axoneme and regulates microtubule sliding in motile axonemes. Plays a critical role in the assembly of N-DRC and also stabilizes the assembly of multiple inner dynein arms and radial spokes. Coassembles with DRC1 to form a central scaffold needed for assembly of the N-DRC and its attachment to the outer doublet microtubules. In Danio rerio (Zebrafish), this protein is Dynein regulatory complex subunit 2 (ccdc65).